The sequence spans 404 residues: Cysteine desulfurase IscS (404 aa).

Residues 75–76 (AT), Asn155, Gln183, and 203–205 (SGH) each bind pyridoxal 5'-phosphate. Lys206 is modified (N6-(pyridoxal phosphate)lysine). Thr243 contributes to the pyridoxal 5'-phosphate binding site. Cys328 (cysteine persulfide intermediate) is an active-site residue. Residue Cys328 coordinates [2Fe-2S] cluster.

This sequence belongs to the class-V pyridoxal-phosphate-dependent aminotransferase family. NifS/IscS subfamily. In terms of assembly, homodimer. Forms a heterotetramer with IscU, interacts with other sulfur acceptors. Pyridoxal 5'-phosphate is required as a cofactor.

The protein resides in the cytoplasm. It catalyses the reaction (sulfur carrier)-H + L-cysteine = (sulfur carrier)-SH + L-alanine. The protein operates within cofactor biosynthesis; iron-sulfur cluster biosynthesis. Master enzyme that delivers sulfur to a number of partners involved in Fe-S cluster assembly, tRNA modification or cofactor biosynthesis. Catalyzes the removal of elemental sulfur and selenium atoms from cysteine and selenocysteine to produce alanine. Functions as a sulfur delivery protein for Fe-S cluster synthesis onto IscU, an Fe-S scaffold assembly protein, as well as other S acceptor proteins. Also functions as a selenium delivery protein in the pathway for the biosynthesis of selenophosphate. The polypeptide is Cysteine desulfurase IscS (Salmonella schwarzengrund (strain CVM19633)).